The sequence spans 431 residues: Adenylosuccinate synthetase (431 aa).

GTP contacts are provided by residues 12-18 and 40-42; these read GDEGKGK and GHS. Catalysis depends on Asp13, which acts as the Proton acceptor. Residues Asp13 and Gly40 each coordinate Mg(2+). IMP is bound by residues 13–16 and 38–41; these read DEGK and NAGH. His41 functions as the Proton donor in the catalytic mechanism. A disordered region spans residues 114–133; that stretch reads QQQERDRSKNGEKIGTTNKG. The span at 115-125 shows a compositional bias: basic and acidic residues; sequence QQERDRSKNGE. 5 residues coordinate IMP: Thr130, Arg144, Gln225, Thr240, and Arg304. Substrate is bound at residue 300–306; that stretch reads TVTKRPR. GTP is bound by residues Arg306, 332–334, and 414–416; these read CLD and SIG.

It belongs to the adenylosuccinate synthetase family. As to quaternary structure, homodimer. It depends on Mg(2+) as a cofactor.

The protein localises to the cytoplasm. It carries out the reaction IMP + L-aspartate + GTP = N(6)-(1,2-dicarboxyethyl)-AMP + GDP + phosphate + 2 H(+). The protein operates within purine metabolism; AMP biosynthesis via de novo pathway; AMP from IMP: step 1/2. Plays an important role in the de novo pathway of purine nucleotide biosynthesis. Catalyzes the first committed step in the biosynthesis of AMP from IMP. The protein is Adenylosuccinate synthetase of Pediococcus pentosaceus (strain ATCC 25745 / CCUG 21536 / LMG 10740 / 183-1w).